Here is a 147-residue protein sequence, read N- to C-terminus: Ribonuclease H (147 aa).

One can recognise an RNase H type-1 domain in the interval 1–142 (MKKVSIYTDG…CDKLATDEIK (142 aa)). D9, E47, D69, and D134 together coordinate Mg(2+).

It belongs to the RNase H family. As to quaternary structure, monomer. Mg(2+) serves as cofactor.

It is found in the cytoplasm. The catalysed reaction is Endonucleolytic cleavage to 5'-phosphomonoester.. In terms of biological role, endonuclease that specifically degrades the RNA of RNA-DNA hybrids. This is Ribonuclease H from Acetivibrio thermocellus (strain ATCC 27405 / DSM 1237 / JCM 9322 / NBRC 103400 / NCIMB 10682 / NRRL B-4536 / VPI 7372) (Clostridium thermocellum).